The following is a 349-amino-acid chain: Hypoxia-inducible factor 1-alpha inhibitor (349 aa).

Residues 1-10 (MAATAAEAVA) show a composition bias toward low complexity. Residues 1-51 (MAATAAEAVASGSGEPREEAGALGPAWDESQLRSYSFPTRPIPRLSQSDPR) form a disordered region. A2 bears the N-acetylalanine mark. The interaction with VHL stretch occupies residues 2–125 (AATAAEAVAS…PRSNREEMKF (124 aa)). The JmjC domain maps to 142 to 312 (ERLYLQQTLN…PKRIEYPLKA (171 aa)). 2-oxoglutarate is bound at residue Y145. Substrate contacts are provided by residues D152 and 181-183 (QLT). T196 provides a ligand contact to 2-oxoglutarate. 2 residues coordinate Fe cation: H199 and D201. 201–203 (DEQ) is a substrate binding site. 2-oxoglutarate-binding residues include N205 and K214. 238 to 239 (RQ) contacts substrate. A Fe cation-binding site is contributed by H279. Residue N294 participates in 2-oxoglutarate binding. 2 residues coordinate substrate: A300 and N321.

In terms of assembly, homodimer; homodimerization is essential for catalytic activity. Interacts with VHL and HIF1A. Part of a complex with VHL, HIF1A and HDAC1 or HDAC2 or HDAC3. Interacts with NFKB1 and NFKBIA. Interacts with NOTCH1, NOTCH2 and NOTCH3 but not with NOTCH4. Interacts with APBA3; binding inhibits HIF1AN binding to HIF1A. Interacts with TNKS2. Interacts with PPP1R12A. Interacts with ASB4. Interacts with UBE3A. Interacts with ANKS3. Interacts with NECAB3; the interaction is indirect and seems to be mediated by APBA3. Requires Fe(2+) as cofactor.

It is found in the nucleus. The protein resides in the cytoplasm. It localises to the perinuclear region. The enzyme catalyses L-asparaginyl-[hypoxia-inducible factor alpha subunit] + 2-oxoglutarate + O2 = (3S)-3-hydroxy-L-asparaginyl-[hypoxia-inducible factor alpha subunit] + succinate + CO2. It carries out the reaction L-histidyl-[ankyrin-repeat domain protein] + 2-oxoglutarate + O2 = (3S)-3-hydroxy-L-histidyl-[ankyrin-repeat domain protein] + succinate + CO2. It catalyses the reaction L-asparaginyl-[ankyrin-repeat domain protein] + 2-oxoglutarate + O2 = (3S)-3-hydroxy-L-asparaginyl-[ankyrin-repeat domain protein] + succinate + CO2. The catalysed reaction is L-aspartyl-[ankyrin-repeat domain protein] + 2-oxoglutarate + O2 = (3S)-3-hydroxy-L-aspartyl-[ankyrin-repeat domain protein] + succinate + CO2. Functionally, hydroxylates HIF-1 alpha at 'Asn-803' in the C-terminal transactivation domain (CAD). Functions as an oxygen sensor and, under normoxic conditions, the hydroxylation prevents interaction of HIF-1 with transcriptional coactivators including Cbp/p300-interacting transactivator. Involved in transcriptional repression through interaction with HIF1A, VHL and histone deacetylases. Hydroxylates specific Asn residues within ankyrin repeat domains (ARD) of NFKB1, NFKBIA, NOTCH1, ASB4, PPP1R12A and several other ARD-containing proteins. Also hydroxylates Asp and His residues within ARDs of ANK1 and TNKS2, respectively. Negatively regulates NOTCH1 activity, accelerating myogenic differentiation. Positively regulates ASB4 activity, promoting vascular differentiation. This is Hypoxia-inducible factor 1-alpha inhibitor (HIF1AN) from Homo sapiens (Human).